Reading from the N-terminus, the 414-residue chain is uncharacterized protein (414 aa).

A disordered region spans residues 87–117; the sequence is KTNDDNKTNGRETHLRPSPSKPEYTGRPTQN. The segment covering 88–101 has biased composition (basic and acidic residues); that stretch reads TNDDNKTNGRETHL. A coiled-coil region spans residues 243 to 405; the sequence is SMLQSSIDKL…RNKLEMEVER (163 aa).

This is an uncharacterized protein from Encephalitozoon cuniculi (strain GB-M1) (Microsporidian parasite).